Reading from the N-terminus, the 820-residue chain is MRSFIKTHKRASSLDNSPRKSSNESPENRRNSQGSFGTELSYPSGYPPNNVLKQSSSFEPLHKLTSNKIFSSKLFKKSSNGKTSSSNTSPLLSRSDAETFAPLLSNTNNIPAIKGTRKHEWGDNDDTSESVILLNRTSMSSMSDTNQDTPDTEIVRIHPNSQQGSILSSQTSADRTPRLSLEEAEDVEDYDITKHSSLSRSQSLKKKRNRLARIHSHDDIMHLRSQSSFSSDLLGSGFSPIPEKSPNPSPLPKYERSPRKENNILDRTNLFDLRKISEASYTAEDESNFNRPFTGVAGGETIQITTSIKDSFVPSPETSHKIRFAADNVIPLSKAQIIENSASEADEDDSNEEDGEEESDSSSRFSFENGNDLCGRTASLKYYSTETNTPPLYVNDIYENDNFDDEMNYFDSNEEEDENMDHLYGGDNTALSGFAGMCTLSDDEFDRTNAAISQELSSHSSQSSKGYTERQRGFSKRDSNKSFEDGNDDYDPSNHCRSYHDIYNLSDEEEAQTINKKVTEPRKRKISDGTNKVTKYADMFLLSDDDAESGSQDEDFGDESRENDVKFNVNSERYGVEHTNLVTTQNHNLNPISFKSPSRFLDVSNVNHSPLAYKTPERNILKSPLQQPIKYHGVSSLLDNDIQGTMKNLYYIDETDEDRFLENSAESEEYYLDEINGIPEDFEFSDDENIMRNLSPLSRLNRTKLLAFRRTHSYSDRPLGVLKDNTPLNYKLEIKNKTVTFFDHNSIHRSYSEPFSSSLLHDSRKSEDNCEDRILDNKTLASPVTPNSSFTKPSPSFTQNSSLSPIQESTTSSDASPKIL.

A compositionally biased stretch (basic residues) spans 1-11 (MRSFIKTHKRA). Disordered regions lie at residues 1–54 (MRSF…VLKQ), 158–182 (HPNS…LSLE), 231–266 (SDLL…NILD), 341–370 (SASE…FENG), 454–498 (QELS…HCRS), and 777–820 (NKTL…PKIL). Positions 17–30 (SPRKSSNESPENRR) are enriched in basic and acidic residues. Positions 159–174 (PNSQQGSILSSQTSAD) are enriched in polar residues. Positions 253-264 (KYERSPRKENNI) are enriched in basic and acidic residues. Residues 344-360 (EADEDDSNEEDGEEESD) show a composition bias toward acidic residues. The segment covering 454 to 464 (QELSSHSSQSS) has biased composition (low complexity). The span at 467-484 (YTERQRGFSKRDSNKSFE) shows a compositional bias: basic and acidic residues. A compositionally biased stretch (polar residues) spans 779–820 (TLASPVTPNSSFTKPSPSFTQNSSLSPIQESTTSSDASPKIL).

It belongs to the ZRG8 family.

It localises to the cytoplasm. The protein resides in the bud. It is found in the bud neck. The protein localises to the bud tip. Functionally, involved in maintenance of polarized growth and daughter-cell-specific transcription. This is Zinc-regulated protein 8 (ZRG8) from Kluyveromyces lactis (strain ATCC 8585 / CBS 2359 / DSM 70799 / NBRC 1267 / NRRL Y-1140 / WM37) (Yeast).